A 229-amino-acid chain; its full sequence is Large ribosomal subunit protein uL1 (229 aa).

It belongs to the universal ribosomal protein uL1 family. Part of the 50S ribosomal subunit.

Binds directly to 23S rRNA. The L1 stalk is quite mobile in the ribosome, and is involved in E site tRNA release. Functionally, protein L1 is also a translational repressor protein, it controls the translation of the L11 operon by binding to its mRNA. The polypeptide is Large ribosomal subunit protein uL1 (Streptococcus uberis (strain ATCC BAA-854 / 0140J)).